A 955-amino-acid polypeptide reads, in one-letter code: 2-oxoglutarate dehydrogenase E1 component (955 aa).

Belongs to the alpha-ketoglutarate dehydrogenase family. Homodimer. Part of the 2-oxoglutarate dehydrogenase (OGDH) complex composed of E1 (2-oxoglutarate dehydrogenase), E2 (dihydrolipoamide succinyltransferase) and E3 (dihydrolipoamide dehydrogenase); the complex contains multiple copies of the three enzymatic components (E1, E2 and E3). It depends on thiamine diphosphate as a cofactor.

It catalyses the reaction N(6)-[(R)-lipoyl]-L-lysyl-[protein] + 2-oxoglutarate + H(+) = N(6)-[(R)-S(8)-succinyldihydrolipoyl]-L-lysyl-[protein] + CO2. In terms of biological role, E1 component of the 2-oxoglutarate dehydrogenase (OGDH) complex which catalyzes the decarboxylation of 2-oxoglutarate, the first step in the conversion of 2-oxoglutarate to succinyl-CoA and CO(2). The sequence is that of 2-oxoglutarate dehydrogenase E1 component from Bacillus cereus (strain 03BB102).